We begin with the raw amino-acid sequence, 211 residues long: Uracil phosphoribosyltransferase (211 aa).

Residues arginine 77, arginine 102, and 129–137 (DPMLATGGS) contribute to the 5-phospho-alpha-D-ribose 1-diphosphate site. Uracil contacts are provided by residues isoleucine 192 and 197-199 (GDA). Aspartate 198 contributes to the 5-phospho-alpha-D-ribose 1-diphosphate binding site.

The protein belongs to the UPRTase family. It depends on Mg(2+) as a cofactor.

It carries out the reaction UMP + diphosphate = 5-phospho-alpha-D-ribose 1-diphosphate + uracil. Its pathway is pyrimidine metabolism; UMP biosynthesis via salvage pathway; UMP from uracil: step 1/1. Allosterically activated by GTP. In terms of biological role, catalyzes the conversion of uracil and 5-phospho-alpha-D-ribose 1-diphosphate (PRPP) to UMP and diphosphate. The protein is Uracil phosphoribosyltransferase of Corynebacterium efficiens (strain DSM 44549 / YS-314 / AJ 12310 / JCM 11189 / NBRC 100395).